The following is a 123-amino-acid chain: UPF0738 protein BCG9842_B4089 (123 aa).

Belongs to the UPF0738 family.

The chain is UPF0738 protein BCG9842_B4089 from Bacillus cereus (strain G9842).